Consider the following 67-residue polypeptide: DNA-directed RNA polymerase subunit omega (67 aa).

It belongs to the RNA polymerase subunit omega family. As to quaternary structure, the RNAP catalytic core consists of 2 alpha, 1 beta, 1 beta' and 1 omega subunit. When a sigma factor is associated with the core the holoenzyme is formed, which can initiate transcription.

The enzyme catalyses RNA(n) + a ribonucleoside 5'-triphosphate = RNA(n+1) + diphosphate. Its function is as follows. Promotes RNA polymerase assembly. Latches the N- and C-terminal regions of the beta' subunit thereby facilitating its interaction with the beta and alpha subunits. This chain is DNA-directed RNA polymerase subunit omega, found in Bordetella petrii (strain ATCC BAA-461 / DSM 12804 / CCUG 43448).